The sequence spans 90 residues: Small ribosomal subunit protein uS15c (90 aa).

It belongs to the universal ribosomal protein uS15 family. As to quaternary structure, part of the 30S ribosomal subunit.

The protein resides in the plastid. The protein localises to the chloroplast. This Glycine max (Soybean) protein is Small ribosomal subunit protein uS15c (rps15).